A 1191-amino-acid chain; its full sequence is Pyruvate-flavodoxin oxidoreductase (1191 aa).

4Fe-4S ferredoxin-type domains lie at Gln-687–Val-716 and Tyr-744–Arg-773. Cys-696, Cys-699, Cys-702, Cys-706, Cys-753, Cys-756, Cys-759, Cys-763, Cys-825, Cys-828, Cys-853, and Cys-1085 together coordinate [4Fe-4S] cluster.

It belongs to the pyruvate:ferredoxin/flavodoxin oxidoreductase family. It depends on [4Fe-4S] cluster as a cofactor.

It carries out the reaction oxidized [flavodoxin] + pyruvate + CoA + 2 H(+) = reduced [flavodoxin] + acetyl-CoA + CO2. Its function is as follows. Oxidoreductase required for the transfer of electrons from pyruvate to flavodoxin, which reduces nitrogenase. The protein is Pyruvate-flavodoxin oxidoreductase (nifJ) of Rhodospirillum rubrum (strain ATCC 11170 / ATH 1.1.1 / DSM 467 / LMG 4362 / NCIMB 8255 / S1).